Reading from the N-terminus, the 317-residue chain is Protein KlaC (317 aa).

Its function is as follows. Belongs to the kla operon, which is associated with cryptic tellurite resistance, and IncW plasmid fertility inhibition. The sequence is that of Protein KlaC (klaC) from Escherichia coli.